A 298-amino-acid polypeptide reads, in one-letter code: 4-hydroxy-tetrahydrodipicolinate synthase (298 aa).

Thr-48 serves as a coordination point for pyruvate. The Proton donor/acceptor role is filled by Tyr-137. Lys-166 acts as the Schiff-base intermediate with substrate in catalysis. Ile-207 serves as a coordination point for pyruvate.

This sequence belongs to the DapA family. Homotetramer; dimer of dimers.

Its subcellular location is the cytoplasm. The enzyme catalyses L-aspartate 4-semialdehyde + pyruvate = (2S,4S)-4-hydroxy-2,3,4,5-tetrahydrodipicolinate + H2O + H(+). The protein operates within amino-acid biosynthesis; L-lysine biosynthesis via DAP pathway; (S)-tetrahydrodipicolinate from L-aspartate: step 3/4. In terms of biological role, catalyzes the condensation of (S)-aspartate-beta-semialdehyde [(S)-ASA] and pyruvate to 4-hydroxy-tetrahydrodipicolinate (HTPA). The polypeptide is 4-hydroxy-tetrahydrodipicolinate synthase (Campylobacter jejuni subsp. jejuni serotype O:2 (strain ATCC 700819 / NCTC 11168)).